The sequence spans 1227 residues: Pre-mRNA-splicing factor ATP-dependent RNA helicase PRP16 (1227 aa).

The residue at position 2 (glycine 2) is an N-acetylglycine. Serine 56 bears the Phosphoserine mark. Basic and acidic residues predominate over residues 60-89 (REREEKDDGEDKKKSKVSSYKDWEESKDDQ). Residues 60 to 320 (REREEKDDGE…ERQQWEDDQR (261 aa)) are disordered. Threonine 117 bears the Phosphothreonine mark. Basic and acidic residues predominate over residues 128–201 (FWERSRQRER…SRRNEPESPR (74 aa)). A phosphoserine mark is found at serine 199 and serine 224. Residues 222-239 (YGSSRRSQWESPSPTPSY) are compositionally biased toward polar residues. Residues 240–263 (RDSERSHRLSTRDRDRSVRGKYSD) are compositionally biased toward basic and acidic residues. Lysine 260 is modified (N6-acetyllysine). The segment covering 300 to 310 (GEEGISFDTEE) has biased composition (acidic residues). The segment covering 311 to 320 (ERQQWEDDQR) has biased composition (basic and acidic residues). Residues lysine 482, lysine 483, and lysine 504 each participate in a glycyl lysine isopeptide (Lys-Gly) (interchain with G-Cter in SUMO2) cross-link. In terms of domain architecture, Helicase ATP-binding spans 542–705 (LTIIRDNSIV…FGNVPIFHIP (164 aa)). 555-562 (GETGSGKT) serves as a coordination point for ATP. The DEAH box motif lies at 652–655 (DEAH). In terms of domain architecture, Helicase C-terminal spans 727-902 (AVKQSLQVHL…NVVLLLKSLG (176 aa)). The disordered stretch occupies residues 1155–1227 (GKSRQENRRR…PRRTPARFGL (73 aa)). Basic and acidic residues-rich tracts occupy residues 1157-1169 (SRQE…KEEA) and 1181-1194 (EQLR…EKRS). Lysine 1166 is covalently cross-linked (Glycyl lysine isopeptide (Lys-Gly) (interchain with G-Cter in SUMO2)). Serine 1194 carries the post-translational modification Phosphoserine.

Belongs to the DEAD box helicase family. DEAH subfamily. PRP16 sub-subfamily. Identified in the spliceosome C complex.

Its subcellular location is the nucleus. It carries out the reaction ATP + H2O = ADP + phosphate + H(+). In terms of biological role, probable ATP-binding RNA helicase. Involved in pre-mRNA splicing as component of the spliceosome. The polypeptide is Pre-mRNA-splicing factor ATP-dependent RNA helicase PRP16 (DHX38) (Homo sapiens (Human)).